The chain runs to 489 residues: Homoserine O-acetyltransferase (489 aa).

Residues 63-435 (NALVICHALS…SPEGHDAFLL (373 aa)) enclose the AB hydrolase-1 domain. The active site involves serine 162. The active-site Nucleophile is the serine 162. Positions 247–272 (RFGRNVPDPSKRQNINGTERLPTPPN) are disordered. Catalysis depends on residues aspartate 401 and histidine 430.

It belongs to the AB hydrolase superfamily. MetX family.

The catalysed reaction is L-homoserine + acetyl-CoA = O-acetyl-L-homoserine + CoA. Its pathway is amino-acid biosynthesis; L-methionine biosynthesis via de novo pathway; O-acetyl-L-homoserine from L-homoserine: step 1/1. Functionally, commits homoserine to the methionine biosynthesis pathway by catalyzing its O-acetylation. This is Homoserine O-acetyltransferase (metE) from Emericella nidulans (strain FGSC A4 / ATCC 38163 / CBS 112.46 / NRRL 194 / M139) (Aspergillus nidulans).